A 196-amino-acid polypeptide reads, in one-letter code: Imidazole glycerol phosphate synthase subunit HisH (196 aa).

Residues 2 to 196 (KVAVIKYNAG…ERIIKNFLEL (195 aa)) enclose the Glutamine amidotransferase type-1 domain. Cysteine 77 (nucleophile) is an active-site residue. Active-site residues include histidine 178 and glutamate 180.

As to quaternary structure, heterodimer of HisH and HisF.

It is found in the cytoplasm. The catalysed reaction is 5-[(5-phospho-1-deoxy-D-ribulos-1-ylimino)methylamino]-1-(5-phospho-beta-D-ribosyl)imidazole-4-carboxamide + L-glutamine = D-erythro-1-(imidazol-4-yl)glycerol 3-phosphate + 5-amino-1-(5-phospho-beta-D-ribosyl)imidazole-4-carboxamide + L-glutamate + H(+). It catalyses the reaction L-glutamine + H2O = L-glutamate + NH4(+). It functions in the pathway amino-acid biosynthesis; L-histidine biosynthesis; L-histidine from 5-phospho-alpha-D-ribose 1-diphosphate: step 5/9. Its function is as follows. IGPS catalyzes the conversion of PRFAR and glutamine to IGP, AICAR and glutamate. The HisH subunit catalyzes the hydrolysis of glutamine to glutamate and ammonia as part of the synthesis of IGP and AICAR. The resulting ammonia molecule is channeled to the active site of HisF. In Bacteroides fragilis (strain ATCC 25285 / DSM 2151 / CCUG 4856 / JCM 11019 / LMG 10263 / NCTC 9343 / Onslow / VPI 2553 / EN-2), this protein is Imidazole glycerol phosphate synthase subunit HisH.